A 329-amino-acid chain; its full sequence is ADP-L-glycero-D-manno-heptose-6-epimerase (329 aa).

NADP(+) contacts are provided by residues 10-11 (FI), 31-32 (DD), Lys38, Lys53, 74-78 (QGACS), and Asn91. Catalysis depends on Tyr138, which acts as the Proton acceptor. An NADP(+)-binding site is contributed by Lys142. Residue Asn167 coordinates substrate. 2 residues coordinate NADP(+): Val168 and Lys176. Lys176 (proton acceptor) is an active-site residue. Residues Arg178, His185, 199–202 (FAGW), Arg212, and Tyr291 each bind substrate.

This sequence belongs to the NAD(P)-dependent epimerase/dehydratase family. HldD subfamily. Homopentamer. It depends on NADP(+) as a cofactor.

The enzyme catalyses ADP-D-glycero-beta-D-manno-heptose = ADP-L-glycero-beta-D-manno-heptose. It functions in the pathway nucleotide-sugar biosynthesis; ADP-L-glycero-beta-D-manno-heptose biosynthesis; ADP-L-glycero-beta-D-manno-heptose from D-glycero-beta-D-manno-heptose 7-phosphate: step 4/4. Its pathway is bacterial outer membrane biogenesis; LPS core biosynthesis. Functionally, catalyzes the interconversion between ADP-D-glycero-beta-D-manno-heptose and ADP-L-glycero-beta-D-manno-heptose via an epimerization at carbon 6 of the heptose. The polypeptide is ADP-L-glycero-D-manno-heptose-6-epimerase (Bordetella pertussis (strain Tohama I / ATCC BAA-589 / NCTC 13251)).